The sequence spans 345 residues: Opioid-binding protein/cell adhesion molecule (345 aa).

The first 27 residues, 1–27, serve as a signal peptide directing secretion; it reads MGVCGYLFLPWKCLVVVSLRLLFLVPT. 3 consecutive Ig-like C2-type domains span residues 39–126, 136–219, and 223–310; these read PKAM…PKTS, PQIM…VKIT, and PPYI…ASIT. Asn-44, Asn-70, and Asn-140 each carry an N-linked (GlcNAc...) asparagine glycan. Cys-57 and Cys-115 form a disulfide bridge. Disulfide bonds link Cys-157–Cys-202 and Cys-244–Cys-296. Residues Asn-285, Asn-293, and Asn-306 are each glycosylated (N-linked (GlcNAc...) asparagine). Asn-322 carries GPI-anchor amidated asparagine lipidation. Positions 323–345 are cleaved as a propeptide — removed in mature form; the sequence is SASRALACLWLSGTLLAHFFIKF.

The protein belongs to the immunoglobulin superfamily. IgLON family.

The protein resides in the cell membrane. In terms of biological role, binds opioids in the presence of acidic lipids; probably involved in cell contact. This is Opioid-binding protein/cell adhesion molecule (OPCML) from Homo sapiens (Human).